The chain runs to 256 residues: Glucanase inhibitor protein 2 (256 aa).

Residues 1-15 form the signal peptide; it reads MKLISTIAAATTAFG. Residues 27 to 254 form the Peptidase S1 domain; the sequence is IFGGGIIPSG…ATEWINSVTK (228 aa). Cysteine 54 and cysteine 70 are disulfide-bonded. Residues asparagine 87, asparagine 102, asparagine 107, and asparagine 157 are each glycosylated (N-linked (GlcNAc...) asparagine). 2 disulfides stabilise this stretch: cysteine 177-cysteine 189 and cysteine 199-cysteine 230.

It belongs to the peptidase S1 family. Forms an apoplastic complex with host endoglucanases in tomato leaves during P.infestans infection.

Its subcellular location is the secreted. Its function is as follows. Secreted effector that suppresses host plant glucan elicitor-mediated defense responses. Targets host endoglucanases and inhibits the endoglucanase-mediated release of elicitor-active glucan oligosaccharides from P.infestans cell walls. The sequence is that of Glucanase inhibitor protein 2 from Phytophthora infestans (Potato late blight agent).